The sequence spans 348 residues: Putative transport protein HI_0338 (348 aa).

Helical transmembrane passes span 7–27 (LHRT…VKLA), 28–48 (AEIV…SPII), 60–80 (LAIT…VGLI), 139–159 (VLLN…VVIF), 196–216 (VIGY…GVFI), 223–243 (VQYA…PNIG), 245–265 (IIAA…GIGF), 267–287 (VAIG…PKMM), and 296–316 (LVVF…GMLL).

This sequence belongs to the autoinducer-2 exporter (AI-2E) (TC 2.A.86) family.

The protein localises to the cell membrane. The polypeptide is Putative transport protein HI_0338 (Haemophilus influenzae (strain ATCC 51907 / DSM 11121 / KW20 / Rd)).